A 415-amino-acid chain; its full sequence is 4-hydroxy-3-methylbut-2-enyl diphosphate reductase (415 aa).

Residue Cys-66 coordinates [4Fe-4S] cluster. His-96 contacts (2E)-4-hydroxy-3-methylbut-2-enyl diphosphate. Position 96 (His-96) interacts with dimethylallyl diphosphate. Isopentenyl diphosphate is bound at residue His-96. A [4Fe-4S] cluster-binding site is contributed by Cys-158. His-186 lines the (2E)-4-hydroxy-3-methylbut-2-enyl diphosphate pocket. Residue His-186 coordinates dimethylallyl diphosphate. Isopentenyl diphosphate is bound at residue His-186. The active-site Proton donor is the Glu-188. Thr-259 is a binding site for (2E)-4-hydroxy-3-methylbut-2-enyl diphosphate. Cys-297 lines the [4Fe-4S] cluster pocket. (2E)-4-hydroxy-3-methylbut-2-enyl diphosphate-binding residues include Ser-326, Ser-327, Asn-328, and Ser-388. The dimethylallyl diphosphate site is built by Ser-326, Ser-327, Asn-328, and Ser-388. Residues Ser-326, Ser-327, Asn-328, and Ser-388 each coordinate isopentenyl diphosphate.

The protein belongs to the IspH family. [4Fe-4S] cluster serves as cofactor.

The enzyme catalyses isopentenyl diphosphate + 2 oxidized [2Fe-2S]-[ferredoxin] + H2O = (2E)-4-hydroxy-3-methylbut-2-enyl diphosphate + 2 reduced [2Fe-2S]-[ferredoxin] + 2 H(+). The catalysed reaction is dimethylallyl diphosphate + 2 oxidized [2Fe-2S]-[ferredoxin] + H2O = (2E)-4-hydroxy-3-methylbut-2-enyl diphosphate + 2 reduced [2Fe-2S]-[ferredoxin] + 2 H(+). The protein operates within isoprenoid biosynthesis; dimethylallyl diphosphate biosynthesis; dimethylallyl diphosphate from (2E)-4-hydroxy-3-methylbutenyl diphosphate: step 1/1. It participates in isoprenoid biosynthesis; isopentenyl diphosphate biosynthesis via DXP pathway; isopentenyl diphosphate from 1-deoxy-D-xylulose 5-phosphate: step 6/6. Functionally, catalyzes the conversion of 1-hydroxy-2-methyl-2-(E)-butenyl 4-diphosphate (HMBPP) into a mixture of isopentenyl diphosphate (IPP) and dimethylallyl diphosphate (DMAPP). Acts in the terminal step of the DOXP/MEP pathway for isoprenoid precursor biosynthesis. The protein is 4-hydroxy-3-methylbut-2-enyl diphosphate reductase of Acaryochloris marina (strain MBIC 11017).